The primary structure comprises 228 residues: Lipoprotein LpqN (228 aa).

An N-terminal signal peptide occupies residues 1-19 (MKHFTAAVATVALSLALAG). C20 is lipidated: N-palmitoyl cysteine. C20 is lipidated: S-diacylglycerol cysteine. Residues 26 to 53 (TDSAPTTSPTTTSPTTSTTTTSATTSAQ) form a disordered region. The span at 28–52 (SAPTTSPTTTSPTTSTTTTSATTSA) shows a compositional bias: low complexity.

In terms of assembly, interacts with the periplasmic loop domains of the mycolate transporters MmpL3 and MmpL11. Also interacts with secreted cell envelope biosynthetic enzymes such as Ag85A. These interactions are weak and may require a putative mycobacterial adapter protein or molecule. Interacts with human ubiquitin ligase CBL.

It localises to the cell membrane. The protein resides in the secreted. Involved in cell envelope biogenesis. May act as a membrane fusion protein, connecting MmpL transporters with periplasmic proteins, and play a role in cell envelope lipid changes during biofilm maturation. Its function is as follows. Is also a virulence factor required for intracellular survival. Associates with CBL, a host ubiquitin ligase, and probably blocks the normal functions of CBL and disturbs CBL-mediated antibacterial activity. Interaction counteracts antibacterial defense but causes a reciprocal enhancement of antiviral defense. The chain is Lipoprotein LpqN from Mycobacterium tuberculosis (strain ATCC 25618 / H37Rv).